The sequence spans 903 residues: Dual 3',5'-cyclic-AMP and -GMP phosphodiesterase 11A (903 aa).

2 consecutive GAF domains span residues 175 to 324 (DLTS…GIAI) and 356 to 512 (DLEK…GLGI). A 3',5'-cyclic GMP-binding site is contributed by Ser378. Residues 542–866 (SKTEVDKFKA…VKWEELDKKR (325 aa)) enclose the PDEase domain. The Proton donor role is filled by His618. A divalent metal cation contacts are provided by His622, His658, Asp659, and Asp770. The segment at 863-903 (DKKRQHDHGASVPASPCSAAEGSETGGVPCCSNNTPPTHVS) is disordered. Residues 893–903 (CSNNTPPTHVS) are compositionally biased toward polar residues.

It belongs to the cyclic nucleotide phosphodiesterase family. It depends on a divalent metal cation as a cofactor.

The protein localises to the cytoplasm. It localises to the cytosol. It carries out the reaction 3',5'-cyclic GMP + H2O = GMP + H(+). The enzyme catalyses 3',5'-cyclic AMP + H2O = AMP + H(+). Its function is as follows. Plays a role in signal transduction by regulating the intracellular concentration of cyclic nucleotides cAMP and cGMP. Catalyzes the hydrolysis of both cAMP and cGMP to 5'-AMP and 5'-GMP, respectively. The chain is Dual 3',5'-cyclic-AMP and -GMP phosphodiesterase 11A (pde11a) from Takifugu rubripes (Japanese pufferfish).